A 689-amino-acid polypeptide reads, in one-letter code: Glycine--tRNA ligase beta subunit (689 aa).

It belongs to the class-II aminoacyl-tRNA synthetase family. Tetramer of two alpha and two beta subunits.

It localises to the cytoplasm. The enzyme catalyses tRNA(Gly) + glycine + ATP = glycyl-tRNA(Gly) + AMP + diphosphate. The chain is Glycine--tRNA ligase beta subunit from Coxiella burnetii (strain RSA 331 / Henzerling II).